A 2376-amino-acid chain; its full sequence is MAG2-interacting protein 2 (2376 aa).

In terms of assembly, forms a complex with MAG2, ZW10/MIP1 and MIP3 on the endoplasmic reticulum.

The protein localises to the endoplasmic reticulum membrane. Functionally, required for proper maturation of seed storage proteins. Forms a complex with MAG2, ZW10/MIP1 and MIP3 on the endoplasmic reticulum that may be responsible for efficient transport of seed storage proteins. In Arabidopsis thaliana (Mouse-ear cress), this protein is MAG2-interacting protein 2.